Consider the following 305-residue polypeptide: tRNA uridine(34) hydroxylase (305 aa).

A Rhodanese domain is found at 125–219; that stretch reads ADENTVVVDT…YLEEVPREQS (95 aa). Cys179 serves as the catalytic Cysteine persulfide intermediate.

Belongs to the TrhO family.

It carries out the reaction uridine(34) in tRNA + AH2 + O2 = 5-hydroxyuridine(34) in tRNA + A + H2O. Functionally, catalyzes oxygen-dependent 5-hydroxyuridine (ho5U) modification at position 34 in tRNAs. The polypeptide is tRNA uridine(34) hydroxylase (Brucella suis (strain ATCC 23445 / NCTC 10510)).